A 197-amino-acid polypeptide reads, in one-letter code: FMN-dependent NADH:quinone oxidoreductase (197 aa).

FMN is bound by residues Ser-10, Ser-16 to Ser-18, and Met-96 to Phe-99.

It belongs to the azoreductase type 1 family. As to quaternary structure, homodimer. It depends on FMN as a cofactor.

It carries out the reaction 2 a quinone + NADH + H(+) = 2 a 1,4-benzosemiquinone + NAD(+). The enzyme catalyses N,N-dimethyl-1,4-phenylenediamine + anthranilate + 2 NAD(+) = 2-(4-dimethylaminophenyl)diazenylbenzoate + 2 NADH + 2 H(+). In terms of biological role, quinone reductase that provides resistance to thiol-specific stress caused by electrophilic quinones. Functionally, also exhibits azoreductase activity. Catalyzes the reductive cleavage of the azo bond in aromatic azo compounds to the corresponding amines. This is FMN-dependent NADH:quinone oxidoreductase from Marinomonas sp. (strain MWYL1).